The following is a 257-amino-acid chain: NAD-capped RNA hydrolase NudC (257 aa).

Residue Arg-69 participates in substrate binding. The Zn(2+) site is built by Cys-98 and Cys-101. Residue Glu-111 coordinates substrate. Zn(2+) contacts are provided by Cys-116 and Cys-119. Residue Tyr-124 coordinates substrate. Residues 125–248 form the Nudix hydrolase domain; the sequence is PQIAPCIIVA…TVARRLIEDT (124 aa). Ala-158, Glu-174, and Glu-178 together coordinate a divalent metal cation. The Nudix box signature appears at 159–180; that stretch reads GFVEVGETLEQAVAREVMEESG. 192–199 contributes to the substrate binding site; that stretch reads QPWPFPQS. Glu-219 provides a ligand contact to a divalent metal cation. Ala-241 contributes to the substrate binding site.

This sequence belongs to the Nudix hydrolase family. NudC subfamily. In terms of assembly, homodimer. Requires Mg(2+) as cofactor. Mn(2+) serves as cofactor. Zn(2+) is required as a cofactor.

The catalysed reaction is a 5'-end NAD(+)-phospho-ribonucleoside in mRNA + H2O = a 5'-end phospho-adenosine-phospho-ribonucleoside in mRNA + beta-nicotinamide D-ribonucleotide + 2 H(+). The enzyme catalyses NAD(+) + H2O = beta-nicotinamide D-ribonucleotide + AMP + 2 H(+). It catalyses the reaction NADH + H2O = reduced beta-nicotinamide D-ribonucleotide + AMP + 2 H(+). MRNA decapping enzyme that specifically removes the nicotinamide adenine dinucleotide (NAD) cap from a subset of mRNAs by hydrolyzing the diphosphate linkage to produce nicotinamide mononucleotide (NMN) and 5' monophosphate mRNA. The NAD-cap is present at the 5'-end of some mRNAs and stabilizes RNA against 5'-processing. Has preference for mRNAs with a 5'-end purine. Catalyzes the hydrolysis of a broad range of dinucleotide pyrophosphates. The polypeptide is NAD-capped RNA hydrolase NudC (Salmonella heidelberg (strain SL476)).